Reading from the N-terminus, the 712-residue chain is Elongation factor G (712 aa).

Residues 8 to 290 (TRYRNIGISA…AVIEFLPSPT (283 aa)) enclose the tr-type G domain. GTP contacts are provided by residues 17–24 (AHIDAGKT), 88–92 (DTPGH), and 142–145 (NKMD).

It belongs to the TRAFAC class translation factor GTPase superfamily. Classic translation factor GTPase family. EF-G/EF-2 subfamily.

The protein resides in the cytoplasm. Functionally, catalyzes the GTP-dependent ribosomal translocation step during translation elongation. During this step, the ribosome changes from the pre-translocational (PRE) to the post-translocational (POST) state as the newly formed A-site-bound peptidyl-tRNA and P-site-bound deacylated tRNA move to the P and E sites, respectively. Catalyzes the coordinated movement of the two tRNA molecules, the mRNA and conformational changes in the ribosome. This Acinetobacter baumannii (strain SDF) protein is Elongation factor G.